Reading from the N-terminus, the 245-residue chain is Biosynthetic peptidoglycan transglycosylase (245 aa).

The helical transmembrane segment at 29-49 threads the bilayer; it reads IVLAVLIVLILPYALIVFYLL.

This sequence belongs to the glycosyltransferase 51 family.

Its subcellular location is the cell inner membrane. The enzyme catalyses [GlcNAc-(1-&gt;4)-Mur2Ac(oyl-L-Ala-gamma-D-Glu-L-Lys-D-Ala-D-Ala)](n)-di-trans,octa-cis-undecaprenyl diphosphate + beta-D-GlcNAc-(1-&gt;4)-Mur2Ac(oyl-L-Ala-gamma-D-Glu-L-Lys-D-Ala-D-Ala)-di-trans,octa-cis-undecaprenyl diphosphate = [GlcNAc-(1-&gt;4)-Mur2Ac(oyl-L-Ala-gamma-D-Glu-L-Lys-D-Ala-D-Ala)](n+1)-di-trans,octa-cis-undecaprenyl diphosphate + di-trans,octa-cis-undecaprenyl diphosphate + H(+). It functions in the pathway cell wall biogenesis; peptidoglycan biosynthesis. Functionally, peptidoglycan polymerase that catalyzes glycan chain elongation from lipid-linked precursors. This chain is Biosynthetic peptidoglycan transglycosylase, found in Rhizobium johnstonii (strain DSM 114642 / LMG 32736 / 3841) (Rhizobium leguminosarum bv. viciae).